The primary structure comprises 269 residues: 5'-nucleotidase SurE (269 aa).

A divalent metal cation-binding residues include Asp-8, Asp-9, Ser-40, and Asn-95.

The protein belongs to the SurE nucleotidase family. A divalent metal cation is required as a cofactor.

It is found in the cytoplasm. The catalysed reaction is a ribonucleoside 5'-phosphate + H2O = a ribonucleoside + phosphate. Functionally, nucleotidase that shows phosphatase activity on nucleoside 5'-monophosphates. The chain is 5'-nucleotidase SurE from Nitratidesulfovibrio vulgaris (strain DSM 19637 / Miyazaki F) (Desulfovibrio vulgaris).